The sequence spans 467 residues: Glutamate--tRNA ligase (467 aa).

Positions 9-19 (PSPTGFLHIGG) match the 'HIGH' region motif. The 'KMSKS' region signature appears at 250–254 (KLSKR). ATP is bound at residue K253.

Belongs to the class-I aminoacyl-tRNA synthetase family. Glutamate--tRNA ligase type 1 subfamily. In terms of assembly, monomer.

It localises to the cytoplasm. It catalyses the reaction tRNA(Glu) + L-glutamate + ATP = L-glutamyl-tRNA(Glu) + AMP + diphosphate. Functionally, catalyzes the attachment of glutamate to tRNA(Glu) in a two-step reaction: glutamate is first activated by ATP to form Glu-AMP and then transferred to the acceptor end of tRNA(Glu). The polypeptide is Glutamate--tRNA ligase (Mesomycoplasma hyopneumoniae (strain 7448) (Mycoplasma hyopneumoniae)).